Reading from the N-terminus, the 903-residue chain is Dynamin-like GTPase msp1, mitochondrial (903 aa).

The transit peptide at 1 to 78 (MGISWFLSRF…RFFSFSSISR (78 aa)) directs the protein to the mitochondrion. Residues 86 to 103 (LPVAGFSLVAGGAAYIGA) traverse the membrane as a helical segment. A compositionally biased stretch (basic and acidic residues) spans 167–188 (VLQAERAKEHRSNSNDKQKSSD). A disordered region spans residues 167–198 (VLQAERAKEHRSNSNDKQKSSDNDEDPNDTTV). A helical membrane pass occupies residues 198 to 214 (VGIGAALAASILSVDSV). The Dynamin-type G domain occupies 260 to 531 (AVTLPSIVVI…LEYTMSKNLQ (272 aa)). A G1 motif region spans residues 270–277 (GSQSSGKS). GTP contacts are provided by serine 273, serine 274, glycine 275, lysine 276, serine 277, serine 278, and glycine 292. A Mg(2+)-binding site is contributed by serine 277. The segment at 296–298 (VTR) is G2 motif. Mg(2+)-binding residues include threonine 297 and aspartate 370. The tract at residues 370 to 373 (DLPG) is G3 motif. The segment at 438–441 (TKMD) is G4 motif. Positions 439, 441, and 468 each coordinate GTP. Positions 467 to 470 (ISRI) are G5 motif. Residues 691–805 (ATSEQVENCV…VLKSRACKHK (115 aa)) are paddle region. A disulfide bond links cysteine 802 and cysteine 811. A GED domain is found at 805–898 (KEAKYTCPEI…KINSLVILEQ (94 aa)).

This sequence belongs to the TRAFAC class dynamin-like GTPase superfamily. Dynamin/Fzo/YdjA family. As to quaternary structure, homooligomer. Interacts with cdr1. In terms of processing, cleavage of the transit peptide by mitochondrial processing protease (MPP) produces a long integral membrane form of msp1 (l-msp1). Further processing by a rhomboid protease after the transmembrane regions produces a short peripheral membrane form of msp1 (s-msp1). Both isoforms are required for full activity.

The protein resides in the mitochondrion inner membrane. It localises to the mitochondrion intermembrane space. It carries out the reaction GTP + H2O = GDP + phosphate + H(+). Dynamin-related GTPase that is essential for normal mitochondrial morphology by mediating fusion of the mitochondrial inner membranes and maintaining respiratory chain function. Exists in two forms: the transmembrane, long form (Dynamin-like GTPase msp1, long form; l-msp1), which is tethered to the inner mitochondrial membrane, and the short soluble form (Dynamin-like GTPase msp1, short form; s-msp1), which results from proteolytic cleavage and localizes in the intermembrane space. Both forms (l-msp1 and s-msp1) cooperate to catalyze the fusion of the mitochondrial inner membrane. Its role in mitochondrial morphology is required for mitochondrial genome maintenance. Functionally, constitutes the transmembrane long form (l-msp1) that plays a central role in mitochondrial inner membrane fusion. L-msp1 and the soluble short form (s-msp1) form higher-order helical assemblies that coordinate the fusion of mitochondrial inner membranes. Inner membrane-anchored l-msp1 molecules initiate membrane remodeling by recruiting soluble s-msp1 to rapidly polymerize into a flexible cylindrical scaffold encaging the mitochondrial inner membrane. Once at the membrane surface, the formation of s-msp1 helices induce bilayer curvature. Msp1 dimerization through the paddle region, which inserts into cardiolipin-containing membrane, promotes GTP hydrolysis and the helical assembly of a flexible msp1 lattice on the membrane, which drives membrane curvature and mitochondrial fusion. Its function is as follows. Constitutes the soluble short form (s-msp1) generated by cleavage, which plays a central role in mitochondrial inner membrane fusion. The transmembrane long form (l-msp1) and the s-msp1 form higher-order helical assemblies that coordinate the fusion of mitochondrial inner membranes. Inner membrane-anchored l-msp1 molecules initiate membrane remodeling by recruiting soluble s-msp1 to rapidly polymerize into a flexible cylindrical scaffold encaging the mitochondrial inner membrane. Once at the membrane surface, the formation of s-msp1 helices induce bilayer curvature. Msp1 dimerization through the paddle region, which inserts into cardiolipin-containing membrane, promotes GTP hydrolysis and the helical assembly of a flexible msp1 lattice on the membrane, which drives membrane curvature and mitochondrial fusion. In Schizosaccharomyces pombe (strain 972 / ATCC 24843) (Fission yeast), this protein is Dynamin-like GTPase msp1, mitochondrial.